A 109-amino-acid polypeptide reads, in one-letter code: ATP-dependent Clp protease adapter protein ClpS (109 aa).

The segment at 1–21 (MAERKQGGQNNGAGSSVITEV) is disordered.

Belongs to the ClpS family. As to quaternary structure, binds to the N-terminal domain of the chaperone ClpA.

Its function is as follows. Involved in the modulation of the specificity of the ClpAP-mediated ATP-dependent protein degradation. This is ATP-dependent Clp protease adapter protein ClpS from Caulobacter sp. (strain K31).